We begin with the raw amino-acid sequence, 724 residues long: Catalase-peroxidase (724 aa).

The segment at residues 96–225 (WHAAGTYRVA…LAAVMMGLIY (130 aa)) is a cross-link (tryptophyl-tyrosyl-methioninium (Trp-Tyr) (with M-251)). His97 acts as the Proton acceptor in catalysis. A cross-link (tryptophyl-tyrosyl-methioninium (Tyr-Met) (with W-96)) is located at residues 225–251 (YVNPEGVDGNPDPLRTAEDVRITFERM). His266 contacts heme b.

It belongs to the peroxidase family. Peroxidase/catalase subfamily. In terms of assembly, homodimer or homotetramer. It depends on heme b as a cofactor. Formation of the three residue Trp-Tyr-Met cross-link is important for the catalase, but not the peroxidase activity of the enzyme.

It catalyses the reaction H2O2 + AH2 = A + 2 H2O. The enzyme catalyses 2 H2O2 = O2 + 2 H2O. Functionally, bifunctional enzyme with both catalase and broad-spectrum peroxidase activity. This chain is Catalase-peroxidase, found in Halorhodospira halophila (strain DSM 244 / SL1) (Ectothiorhodospira halophila (strain DSM 244 / SL1)).